The chain runs to 162 residues: Phosphopantetheine adenylyltransferase (162 aa).

Residue Ser11 participates in substrate binding. Residues 11–12 (SF) and His19 contribute to the ATP site. Substrate contacts are provided by Lys43, Val76, and Arg90. ATP-binding positions include 91–93 (GLR), Glu101, and 126–132 (HLYISSS).

This sequence belongs to the bacterial CoaD family. In terms of assembly, homohexamer. Mg(2+) is required as a cofactor.

It is found in the cytoplasm. The catalysed reaction is (R)-4'-phosphopantetheine + ATP + H(+) = 3'-dephospho-CoA + diphosphate. It participates in cofactor biosynthesis; coenzyme A biosynthesis; CoA from (R)-pantothenate: step 4/5. Its function is as follows. Reversibly transfers an adenylyl group from ATP to 4'-phosphopantetheine, yielding dephospho-CoA (dPCoA) and pyrophosphate. The polypeptide is Phosphopantetheine adenylyltransferase (Streptococcus pneumoniae (strain Taiwan19F-14)).